Reading from the N-terminus, the 463-residue chain is SCF E3 ubiquitin ligase complex F-box protein pof2 (463 aa).

The F-box domain occupies 1–42; that stretch reads MRVPNEVCFNILSYLEADELRCKSTVCTSWRNFIIPTLWEKV. LRR repeat units follow at residues 145–170, 171–196, 198–220, 225–247, 249–271, 278–299, 304–326, 328–353, 354–378, and 380–405; these read CPNLKALNIGNCGLVEDTGMVQIIKR, CPYLNRLIIPNCRKLTDVSLQILSEK, DLIELDISGCEGFHNADTLSRLV, GLKELSMDGCTELSHFITFLNLN, ELDAMRALSLNNLPDLKDSDIEL, KLNSLFLSKCIGLTDSSLLSLT, SLTTLHLGHCYEITDIGVQCLLK, CKNITYIDFGGCLRLSDIAVSAIAKL, PYLQRVGLVKCICLTDLSVILLSGS, and SRNLERVHLSYCIGLTAKSVSYLMYN.

As to quaternary structure, part of a SCF E3 ubiquitin ligase complex. Interacts with skp1.

The protein localises to the mitochondrion. In terms of biological role, involved in substrate recognition in ubiquitin-dependent degradation. The polypeptide is SCF E3 ubiquitin ligase complex F-box protein pof2 (pof2) (Schizosaccharomyces pombe (strain 972 / ATCC 24843) (Fission yeast)).